The chain runs to 485 residues: Palmitoyltransferase ZDHHC1 (485 aa).

The disordered stretch occupies residues 1 to 41 (MYKMNICNKPSNKTAPEKSVWTAPAQPSGPSPELQGQRSRR). Over 1-52 (MYKMNICNKPSNKTAPEKSVWTAPAQPSGPSPELQGQRSRRNGWSWPPHPLQ) the chain is Cytoplasmic. The segment at 1-271 (MYKMNICNKP…GHLLCFHIYL (271 aa)) is mediates interaction with STING1. Residues 53-73 (IVAWLLYLFFAVIGFGILVPL) traverse the membrane as a helical segment. At 74–77 (LPHH) the chain is on the lumenal side. The chain crosses the membrane as a helical span at residues 78–98 (WVPAGYACMGAIFAGHLVVHL). At 99–185 (TAVSIDPADA…YRLFLHSVAS (87 aa)) the chain is on the cytoplasmic side. Residues 134–184 (LHCNLCNVDVSARSKHCSACNKCVCGFDHHCKWLNNCVGERNYRLFLHSVA) form the DHHC domain. The active-site S-palmitoyl cysteine intermediate is the cysteine 164. Residues 186–206 (ALLGVLLLVLVATYVFVEFFV) form a helical membrane-spanning segment. Residues 207 to 241 (NPMRLRTNRHFEVLKNHTDVWFVFLPAAPVETQAP) are Lumenal-facing. Residues 242 to 262 (AILALAALLILLGLLSTALLG) traverse the membrane as a helical segment. Residues 263-485 (HLLCFHIYLM…RGRRVRPPFS (223 aa)) lie on the Cytoplasmic side of the membrane. 2 disordered regions span residues 324–358 (EPPG…GPPV) and 462–485 (LWPP…PPFS). The span at 475 to 485 (WRGRRVRPPFS) shows a compositional bias: basic residues.

The protein belongs to the DHHC palmitoyltransferase family. In terms of assembly, interacts with STING1; ZDHHC1 constitutively interacts with STING1 and in presence of DNA viruses activates it by promoting its cGAMP-induced oligomerization and the recruitment of downstream signaling components. In terms of tissue distribution, widely expressed with significant expression in heart, brain, placenta, lung, liver, kidney, testis, thymus and small intestine. Expressed at lower levels in adult pancreas and lung.

The protein resides in the endosome membrane. The protein localises to the endoplasmic reticulum membrane. Its subcellular location is the golgi apparatus. The catalysed reaction is L-cysteinyl-[protein] + hexadecanoyl-CoA = S-hexadecanoyl-L-cysteinyl-[protein] + CoA. In terms of biological role, palmitoyltransferase that catalyzes the addition of palmitate onto various protein substrates, such as NCDN and NLRP3. Has a palmitoyltransferase activity toward NCDN and regulates NCDN association with endosome membranes through this palmitoylation. Acts as an activator of the NLRP3 inflammasome by mediating palmitoylation of 'Cys-130' and 'Cys-958' of NLRP3, thereby promoting NLRP3 phosphorylation and activation by NEK7. Its function is as follows. Also has a palmitoyltransferase activity-independent function in DNA virus-triggered and CGAS-mediated innate immune response. Functions as an activator of STING1 by promoting its cGAMP-induced oligomerization and the recruitment of downstream signaling components. This Homo sapiens (Human) protein is Palmitoyltransferase ZDHHC1.